The chain runs to 837 residues: MKDKFSFQKNYDFNLVSDGLYEIWNNAGFFKPKDKNNSFTAILPPPNLTGTLHIGHAFEVSITDQIMRFKKMQGFSINWIPGFDHAGIATQTKYEKIALKENQKYFDADDDKKSEMIMNWALNQSEIIKNQLKSLGVCLNWSETKFTLSEQANKIVNNCFKNLYENGFIYQAYTLVNWDTKLNTAISNIEVINKPVNQHLHYVVYKLANDSKQELIVATTRPETIFADVCLLVNPKDKRYTNFWNKLVVNPLTGKQIPVVTDSYVDIKFGTGILKCTPAHDFNDYEINTKYKFDFLSCIDSNGILNQNASKFQGLSVLQARNKIVKWLEKNKLLVKSIPLTSNVGFSERSGTVVEPMLSKQWFVDLPKLKDHLYLKKYPDFIPKRFNKQVSNWLNKLKPWCISRQLIWGHKIPVWFENNTGEIVVGEKPSKNLQNYTRSKDVLDTWFSSSLWPLICLNWEQDDSFHETELLVTGYDILFFWVLRMLFNSFFETKKLPFKTVLIHGLVRDEQNRKMSKSLNNGIDPVDLIRNYGADAVRLFLCSNHTPGDDLIFSEQKIKSAWNFLNKLWNVTKFVIQLENDQEISYDLDKLSLSETWILAKLDKVIQKITKLLDKFQLALANQILVKFVWDDFCNTFIEAIKKEPNQLKPQLFYTAKSVLSNIAILLSITVPFLSERIYQQFNNKSVMQATWPLATKIKIPKLFDLVLAAINDLRNYRKQYMLNSQQKLVVILSGKNAVDVKQYFNFSWIELKIETNKKVSFKYQIVDDTTQRLKSLQKQQAFFESEVKRSQAIVKNKSFLEKAPKEKVKSEFLKLEEYQKKLTETNQLIAKLTKAH.

Residues 46–56 (PNLTGTLHIGH) carry the 'HIGH' region motif. The 'KMSKS' region motif lies at 514 to 518 (KMSKS). An ATP-binding site is contributed by Lys517. Positions 767–837 (VDDTTQRLKS…QLIAKLTKAH (71 aa)) form a coiled coil.

Belongs to the class-I aminoacyl-tRNA synthetase family. ValS type 1 subfamily. Monomer.

It is found in the cytoplasm. The catalysed reaction is tRNA(Val) + L-valine + ATP = L-valyl-tRNA(Val) + AMP + diphosphate. Its function is as follows. Catalyzes the attachment of valine to tRNA(Val). As ValRS can inadvertently accommodate and process structurally similar amino acids such as threonine, to avoid such errors, it has a 'posttransfer' editing activity that hydrolyzes mischarged Thr-tRNA(Val) in a tRNA-dependent manner. The chain is Valine--tRNA ligase from Mycoplasma genitalium (strain ATCC 33530 / DSM 19775 / NCTC 10195 / G37) (Mycoplasmoides genitalium).